The following is a 350-amino-acid chain: MDSFNYTTPDYGHYDDKDTLDLNTPVDKTSNTLRVPDILALVIFAVVFLVGVLGNALVVWVTAFEAKRTINAIWFLNLAVADFLSCLALPILFTSIVQHHHWPFGGAACSILPSLILLNMYASILLLATISADRFLLVFKPIWCQNFRGAGLAWIACAVAWGLALLLTIPSFLYRVVREEYFPPKVLCGVDYSHDKRRERAVAIVRLVLGFLWPLLTLTICYTFILLRTWSRRATRSTKTLKVVVAVVASFFIFWLPYQVTGIMMSFLEPSSPTFLLLKKLDSLCVSFAYINCCINPIIYVVAGQGFQGRLRKSLPSLLRNVLTEESVVRESKSFTRSTVDTMAQKTQAV.

Over 1–37 the chain is Extracellular; sequence MDSFNYTTPDYGHYDDKDTLDLNTPVDKTSNTLRVPD. Asparagine 5 carries N-linked (GlcNAc...) asparagine glycosylation. The interval 10-18 is required for CHIPS binding; the sequence is DYGHYDDKD. Tyrosine 11 and tyrosine 14 each carry sulfotyrosine. Positions 21–30 are involved in C5a binding; it reads DLNTPVDKTS. Residues 38-64 form a helical membrane-spanning segment; sequence ILALVIFAVVFLVGVLGNALVVWVTAF. The Cytoplasmic portion of the chain corresponds to 65 to 69; it reads EAKRT. The chain crosses the membrane as a helical span at residues 70–93; it reads INAIWFLNLAVADFLSCLALPILF. Over 94-110 the chain is Extracellular; sequence TSIVQHHHWPFGGAACS. Cysteines 109 and 188 form a disulfide. Residues 111 to 132 form a helical membrane-spanning segment; the sequence is ILPSLILLNMYASILLLATISA. Residues 133–153 lie on the Cytoplasmic side of the membrane; it reads DRFLLVFKPIWCQNFRGAGLA. Residues 154 to 174 form a helical membrane-spanning segment; it reads WIACAVAWGLALLLTIPSFLY. Over 175-200 the chain is Extracellular; sequence RVVREEYFPPKVLCGVDYSHDKRRER. A helical transmembrane segment spans residues 201–226; that stretch reads AVAIVRLVLGFLWPLLTLTICYTFIL. At 227-242 the chain is on the cytoplasmic side; sequence LRTWSRRATRSTKTLK. A helical transmembrane segment spans residues 243-265; the sequence is VVVAVVASFFIFWLPYQVTGIMM. At 266–282 the chain is on the extracellular side; it reads SFLEPSSPTFLLLKKLD. A helical transmembrane segment spans residues 283 to 303; that stretch reads SLCVSFAYINCCINPIIYVVA. Over 304–350 the chain is Cytoplasmic; that stretch reads GQGFQGRLRKSLPSLLRNVLTEESVVRESKSFTRSTVDTMAQKTQAV. A phosphoserine mark is found at serine 314, serine 317, serine 327, serine 332, serine 334, and serine 338.

The protein belongs to the G-protein coupled receptor 1 family. In terms of assembly, homodimer. May also form higher-order oligomers. Interacts (when phosphorylated) with ARRB1 and ARRB2; the interaction is associated with internalization of C5aR. Interacts (via N-terminal domain) with S.aureus chemotaxis inhibitory protein (CHIPS); the interaction blocks the receptor and may thus inhibit the immune response. Sulfation plays a critical role in the association of C5aR with C5a, but no significant role in the ability of the receptor to transduce a signal and mobilize calcium in response to a small a small peptide agonist. Sulfation at Tyr-14 is important for CHIPS binding. In terms of processing, phosphorylated on serine residues in response to C5a binding, resulting in internalization of the receptor and short-term desensitization to the ligand. The key residues involved in this process are Ser-334 and Ser-338.

It is found in the cell membrane. Its subcellular location is the cytoplasmic vesicle. In terms of biological role, receptor for the chemotactic and inflammatory peptide anaphylatoxin C5a. The ligand interacts with at least two sites on the receptor: a high-affinity site on the extracellular N-terminus, and a second site in the transmembrane region which activates downstream signaling events. Receptor activation stimulates chemotaxis, granule enzyme release, intracellular calcium release and superoxide anion production. The chain is C5a anaphylatoxin chemotactic receptor 1 (C5AR1) from Homo sapiens (Human).